Consider the following 127-residue polypeptide: Large ribosomal subunit protein bL19 (127 aa).

The protein belongs to the bacterial ribosomal protein bL19 family.

Functionally, this protein is located at the 30S-50S ribosomal subunit interface and may play a role in the structure and function of the aminoacyl-tRNA binding site. In Synechococcus sp. (strain JA-3-3Ab) (Cyanobacteria bacterium Yellowstone A-Prime), this protein is Large ribosomal subunit protein bL19.